The following is a 266-amino-acid chain: Apolipoprotein A-I (266 aa).

Positions 1 to 18 (MKAVVLTLAVLFLTGSQA) are cleaved as a signal peptide. 2 tandem repeats follow at residues 67-88 (LKLL…EQIG) and 89-110 (PVTQ…QEMN). The interval 67–266 (LKLLDNWDSL…DEATKKLNAQ (200 aa)) is 10 X approximate tandem repeats. Met-109 is modified (methionine sulfoxide). Residues 111–121 (KDLEEVKKKVQ) form a 3; half-length repeat. A run of 5 repeats spans residues 122–143 (PYLD…QKVA), 144–165 (PLGA…EKLS), 166–187 (PLGE…AQLA), 188–209 (PYSE…EGGG), and 210–231 (ATLT…EKAK). Residues 232–242 (PALEDLRQGLM) form a 9; half-length repeat. Copy 10 of the repeat occupies 243–266 (PVLESFRASLLAAVDEATKKLNAQ).

The protein belongs to the apolipoprotein A1/A4/E family. As to quaternary structure, homodimer. Interacts with APOA1BP and CLU. Component of a sperm activating protein complex (SPAP), consisting of APOA1, an immunoglobulin heavy chain, an immunoglobulin light chain and albumin. Interacts with NDRG1. Interacts with SCGB3A2. Interacts with NAXE and YJEFN3. Post-translationally, glycosylated. In terms of processing, palmitoylated. Phosphorylation sites are present in the extracellular medium.

The protein localises to the secreted. Its function is as follows. Participates in the reverse transport of cholesterol from tissues to the liver for excretion by promoting cholesterol efflux from tissues and by acting as a cofactor for the lecithin cholesterol acyltransferase (LCAT). As part of the SPAP complex, activates spermatozoa motility. This chain is Apolipoprotein A-I (APOA1), found in Phoca vitulina (Harbor seal).